The primary structure comprises 257 residues: Taurine import ATP-binding protein TauB (257 aa).

Positions 6–233 (LDKISIHYDG…RYAAGEPIRA (228 aa)) constitute an ABC transporter domain. 38 to 45 (GRSGCGKT) is an ATP binding site.

It belongs to the ABC transporter superfamily. Taurine importer (TC 3.A.1.17.1) family. In terms of assembly, the complex is composed of two ATP-binding proteins (TauB), two transmembrane proteins (TauC) and a solute-binding protein (TauA).

Its subcellular location is the cell inner membrane. It catalyses the reaction taurine(out) + ATP + H2O = taurine(in) + ADP + phosphate + H(+). Its function is as follows. Part of the ABC transporter complex TauABC involved in taurine import. Responsible for energy coupling to the transport system. The chain is Taurine import ATP-binding protein TauB from Mesorhizobium japonicum (strain LMG 29417 / CECT 9101 / MAFF 303099) (Mesorhizobium loti (strain MAFF 303099)).